A 666-amino-acid chain; its full sequence is Neopullulanase 1 (666 aa).

The N-terminal stretch at 1–29 (MIKLLKPMSLSILLVFILSFSFPFPTAKA) is a signal peptide. Positions 31, 33, 35, 71, 125, 174, 176, 179, 180, 216, and 218 each coordinate Ca(2+). Histidine 296 provides a ligand contact to substrate. Ca(2+)-binding residues include aspartate 305, asparagine 309, phenylalanine 310, serine 312, and glutamate 317. Arginine 383 contacts substrate. Aspartate 385 serves as the catalytic Nucleophile. The Proton donor role is filled by glutamate 425. Residues 500–501 (HD), aspartate 545, and arginine 549 contribute to the substrate site.

The protein belongs to the glycosyl hydrolase 13 family. The cofactor is Ca(2+).

It is found in the secreted. The catalysed reaction is Hydrolysis of pullulan to panose (6-alpha-D-glucosylmaltose).. Its function is as follows. Endohydrolysis of 1,4-alpha-glucosidic linkages in pullulan to form panose. Also hydrolyzes cyclodextrins. The polypeptide is Neopullulanase 1 (tvaI) (Thermoactinomyces vulgaris).